Consider the following 125-residue polypeptide: MGRKNDIIQKIDSFIGKKIYSLRLAKGLSRQQLAEVIDVTHQQLQKYEKAINRISVGRLVLIAEALDRNIDYFFEGLEEANKPQPVHTQHQRMCIEVSRNFMKINSTEEQQAVNNLVKCLAGKKN.

The HTH cro/C1-type domain occupies 19 to 73 (IYSLRLAKGLSRQQLAEVIDVTHQQLQKYEKAINRISVGRLVLIAEALDRNIDYF). The H-T-H motif DNA-binding region spans 30–49 (RQQLAEVIDVTHQQLQKYEK).

This is an uncharacterized protein from Rickettsia conorii (strain ATCC VR-613 / Malish 7).